Here is a 189-residue protein sequence, read N- to C-terminus: Protein GrpE (189 aa).

Residues 1–38 (MTKSNETERMEESEETHSSDIRSASESDHASGSDHTES) are compositionally biased toward basic and acidic residues. Residues 1-54 (MTKSNETERMEESEETHSSDIRSASESDHASGSDHTESADEIPTADAEQGELEQ) are disordered.

This sequence belongs to the GrpE family. As to quaternary structure, homodimer.

It is found in the cytoplasm. In terms of biological role, participates actively in the response to hyperosmotic and heat shock by preventing the aggregation of stress-denatured proteins, in association with DnaK and GrpE. It is the nucleotide exchange factor for DnaK and may function as a thermosensor. Unfolded proteins bind initially to DnaJ; upon interaction with the DnaJ-bound protein, DnaK hydrolyzes its bound ATP, resulting in the formation of a stable complex. GrpE releases ADP from DnaK; ATP binding to DnaK triggers the release of the substrate protein, thus completing the reaction cycle. Several rounds of ATP-dependent interactions between DnaJ, DnaK and GrpE are required for fully efficient folding. In Tropheryma whipplei (strain Twist) (Whipple's bacillus), this protein is Protein GrpE.